The primary structure comprises 81 residues: uncharacterized protein (81 aa).

Residues 46–81 (ASSPVVKRKSLVKRKSPVKRSPLKKRSQMRTSPCEA) are disordered. Residues 51–73 (VKRKSLVKRKSPVKRSPLKKRSQ) show a composition bias toward basic residues.

This is an uncharacterized protein from Frog virus 3 (isolate Goorha) (FV-3).